The primary structure comprises 726 residues: Dipeptidyl-peptidase 5 (726 aa).

Residues 1-19 (MAPAKWLIASLAFASTGLA) form the signal peptide. N-linked (GlcNAc...) asparagine glycans are attached at residues N96 and N252. A disordered region spans residues 268 to 292 (VAEPINKRNGPRTPHGIEGASSSPV). N-linked (GlcNAc...) asparagine glycosylation occurs at N485. S558 acts as the Charge relay system in catalysis. A glycan (N-linked (GlcNAc...) asparagine) is linked at N605. Active-site charge relay system residues include D641 and H673. N-linked (GlcNAc...) asparagine glycosylation occurs at N699.

It belongs to the peptidase S9C family.

Its subcellular location is the secreted. Functionally, extracellular dipeptidyl-peptidase which removes N-terminal dipeptides sequentially from polypeptides having unsubstituted N-termini. Contributes to pathogenicity. This is Dipeptidyl-peptidase 5 (DPP5) from Arthroderma otae (Microsporum canis).